Consider the following 346-residue polypeptide: MEKTLGLEIIEVVEQAAIASARLMGKGLRNEADGVAVKAMRDRMNQIYMRGRIVIGEGERDDAPMLYIGEQVGICTQPNAAQMCSIDELLEIDIAVDPCEGTNLVAEGRQGSMAVLAISEKGGLLGAPDLYMKKLAAPPQAKGKVHIDYPATKNLQIIAECLDRAIEDLVVIVMKRDRHKDLISEIRSTGARVRFIDDGDISAALSAGINGTGVHALMGIGAAPEGVISAAALRCLGSHFQGQLIYDPDVVQTGLLKGTKAEIEEQLKAQGVEQPDKVWEAEELASGKNVLFAACGITDGDFIKGVRFFTGSARTETMVISSQSNTVRFVDTVHILDPAHHASLVI.

Mn(2+)-binding residues include Asp33, Glu57, Asp97, and Glu100. Residues 100-102, Tyr131, 176-178, and 198-200 each bind substrate; these read EGT, RDR, and DGD. A Mn(2+)-binding site is contributed by Glu225.

The protein belongs to the FBPase class 2 family. In terms of assembly, homotetramer. The cofactor is Mn(2+).

It carries out the reaction beta-D-fructose 1,6-bisphosphate + H2O = beta-D-fructose 6-phosphate + phosphate. The enzyme catalyses D-sedoheptulose 1,7-bisphosphate + H2O = D-sedoheptulose 7-phosphate + phosphate. It functions in the pathway carbohydrate biosynthesis; Calvin cycle. Functionally, catalyzes the hydrolysis of fructose 1,6-bisphosphate (Fru 1,6-P2) and sedoheptulose 1,7-bisphosphate (Sed 1,7-P2) to fructose 6-phosphate and sedoheptulose 7-phosphate, respectively. This is D-fructose 1,6-bisphosphatase class 2/sedoheptulose 1,7-bisphosphatase from Gloeobacter violaceus (strain ATCC 29082 / PCC 7421).